We begin with the raw amino-acid sequence, 310 residues long: Tagatose-6-phosphate kinase (310 aa).

It belongs to the carbohydrate kinase PfkB family. LacC subfamily.

It carries out the reaction D-tagatofuranose 6-phosphate + ATP = D-tagatofuranose 1,6-bisphosphate + ADP + H(+). Its pathway is carbohydrate metabolism; D-tagatose 6-phosphate degradation; D-glyceraldehyde 3-phosphate and glycerone phosphate from D-tagatose 6-phosphate: step 1/2. This chain is Tagatose-6-phosphate kinase, found in Streptococcus mutans serotype c (strain ATCC 700610 / UA159).